The chain runs to 297 residues: Trans-enoyl reductase TOXD (297 aa).

NADP(+) is bound by residues 162 to 165 and tyrosine 203; that span reads STAT.

Belongs to the zinc-containing alcohol dehydrogenase family. As to quaternary structure, monomer.

Its function is as follows. Trans-enoyl reductase; part of the diffuse TOX2 gene cluster that mediates the biosynthesis of the HC-toxin, cyclic tetrapeptide of structure cyclo(D-Pro-L-Ala-D-Ala-L-Aeo), where Aeo stands for 2-amino-9,10-epoxi-8-oxodecanoic acid. HC-toxin is a determinant of specificity and virulence in the interaction between the producing fungus and its host, maize. TOXD does not seem to play a role in HC-toxin biosynthesis. The chain is Trans-enoyl reductase TOXD from Cochliobolus carbonum (Maize leaf spot fungus).